Here is a 493-residue protein sequence, read N- to C-terminus: Galactose-1-phosphate uridylyltransferase 2 (493 aa).

The protein belongs to the galactose-1-phosphate uridylyltransferase type 2 family.

It is found in the cytoplasm. The catalysed reaction is alpha-D-galactose 1-phosphate + UDP-alpha-D-glucose = alpha-D-glucose 1-phosphate + UDP-alpha-D-galactose. It functions in the pathway carbohydrate metabolism; galactose metabolism. This Streptococcus pneumoniae serotype 4 (strain ATCC BAA-334 / TIGR4) protein is Galactose-1-phosphate uridylyltransferase 2 (galT2).